Reading from the N-terminus, the 429-residue chain is Trigger factor (429 aa).

Residues 164–249 (GDTAVIDFEG…VKEVKTKVLP (86 aa)) enclose the PPIase FKBP-type domain.

It belongs to the FKBP-type PPIase family. Tig subfamily.

Its subcellular location is the cytoplasm. It carries out the reaction [protein]-peptidylproline (omega=180) = [protein]-peptidylproline (omega=0). In terms of biological role, involved in protein export. Acts as a chaperone by maintaining the newly synthesized protein in an open conformation. Functions as a peptidyl-prolyl cis-trans isomerase. This is Trigger factor from Lysinibacillus sphaericus (strain C3-41).